Here is a 211-residue protein sequence, read N- to C-terminus: ATP phosphoribosyltransferase (211 aa).

Belongs to the ATP phosphoribosyltransferase family. Short subfamily. In terms of assembly, heteromultimer composed of HisG and HisZ subunits.

The protein resides in the cytoplasm. The enzyme catalyses 1-(5-phospho-beta-D-ribosyl)-ATP + diphosphate = 5-phospho-alpha-D-ribose 1-diphosphate + ATP. It participates in amino-acid biosynthesis; L-histidine biosynthesis; L-histidine from 5-phospho-alpha-D-ribose 1-diphosphate: step 1/9. Catalyzes the condensation of ATP and 5-phosphoribose 1-diphosphate to form N'-(5'-phosphoribosyl)-ATP (PR-ATP). Has a crucial role in the pathway because the rate of histidine biosynthesis seems to be controlled primarily by regulation of HisG enzymatic activity. This Pseudomonas syringae pv. tomato (strain ATCC BAA-871 / DC3000) protein is ATP phosphoribosyltransferase.